We begin with the raw amino-acid sequence, 239 residues long: Ribosomal RNA small subunit methyltransferase G (239 aa).

S-adenosyl-L-methionine is bound by residues glycine 77, phenylalanine 82, 128–129, and arginine 147; that span reads AE. Residues 219–239 form a disordered region; that stretch reads KNTPKKYPRKPGTPNKSPIEG.

Belongs to the methyltransferase superfamily. RNA methyltransferase RsmG family.

The protein resides in the cytoplasm. Specifically methylates the N7 position of guanine in position 535 of 16S rRNA. The chain is Ribosomal RNA small subunit methyltransferase G from Bacillus subtilis (strain 168).